A 129-amino-acid chain; its full sequence is Small ribosomal subunit protein uS11 (129 aa).

It belongs to the universal ribosomal protein uS11 family. In terms of assembly, part of the 30S ribosomal subunit. Interacts with proteins S7 and S18. Binds to IF-3.

Its function is as follows. Located on the platform of the 30S subunit, it bridges several disparate RNA helices of the 16S rRNA. Forms part of the Shine-Dalgarno cleft in the 70S ribosome. The chain is Small ribosomal subunit protein uS11 from Nitrosomonas eutropha (strain DSM 101675 / C91 / Nm57).